We begin with the raw amino-acid sequence, 523 residues long: Cyclin-dependent kinase 17 (523 aa).

Ser-9 is subject to Phosphoserine. The interval 31–55 (IEESSSKDNEPIVKNGRPPTSHSMH) is disordered. Residues Ser-80, Ser-92, and Ser-105 each carry the phosphoserine modification. The disordered stretch occupies residues 103 to 123 (MGSDGESDQASGTSSDEVQSP). A compositionally biased stretch (polar residues) spans 110-123 (DQASGTSSDEVQSP). 4 positions are modified to phosphoserine: Ser-137, Ser-146, Ser-165, and Ser-180. One can recognise a Protein kinase domain in the interval 192–473 (YIKLEKLGEG…AEEAMKHVYF (282 aa)). ATP is bound by residues 198–206 (LGEGTYATV) and Lys-221. Catalysis depends on Asp-313, which acts as the Proton acceptor.

The protein belongs to the protein kinase superfamily. CMGC Ser/Thr protein kinase family. CDC2/CDKX subfamily. In terms of assembly, found in a complex containing CABLES1, CDK16 and TDRD7. Interacts with TDRD7. As to expression, brain specific. Within the brain it is concentrated in the neuronal layers of the hippocampus and olfactory bulb, which mostly consist of post-mitotic neurons.

It carries out the reaction L-seryl-[protein] + ATP = O-phospho-L-seryl-[protein] + ADP + H(+). The enzyme catalyses L-threonyl-[protein] + ATP = O-phospho-L-threonyl-[protein] + ADP + H(+). In terms of biological role, may play a role in terminally differentiated neurons. Has a Ser/Thr-phosphorylating activity for histone H1. In Rattus norvegicus (Rat), this protein is Cyclin-dependent kinase 17 (Cdk17).